A 64-amino-acid chain; its full sequence is Large ribosomal subunit protein bL32 (64 aa).

Residues 1–28 (MAVQKSRVTPSRRGQRRSHDALTAKKLS) are disordered.

It belongs to the bacterial ribosomal protein bL32 family.

In Xylella fastidiosa (strain 9a5c), this protein is Large ribosomal subunit protein bL32 (rpmF).